Consider the following 132-residue polypeptide: C-glycoside deglycosidase beta subunit (132 aa).

Belongs to the C-glycoside deglycosidase beta subunit family. As to quaternary structure, heterodimer composed of an alpha subunit (CarB2) and a beta subunit (CarC2). A divalent metal cation is required as a cofactor.

The enzyme catalyses 3''-dehydroorientin = 1,5-anhydro-D-erythro-hex-1-en-3-ulose + luteolin. With respect to regulation, activity is strongly reduced in the presence of chelating agents. Carbon-carbon bond-cleaving enzyme which participates in the metabolism of C-glycosides. Acts on the C8-glycosylated compound 3''-dehydroorientin (3''-oxo-orientin). This is C-glycoside deglycosidase beta subunit from Arthrobacter globiformis (strain ATCC 8010 / DSM 20124 / JCM 1332 / NBRC 12137 / NCIMB 8907 / NRRL B-2979 / 168).